Consider the following 236-residue polypeptide: Phosphoribosylaminoimidazole-succinocarboxamide synthase (236 aa).

The protein belongs to the SAICAR synthetase family.

The enzyme catalyses 5-amino-1-(5-phospho-D-ribosyl)imidazole-4-carboxylate + L-aspartate + ATP = (2S)-2-[5-amino-1-(5-phospho-beta-D-ribosyl)imidazole-4-carboxamido]succinate + ADP + phosphate + 2 H(+). The protein operates within purine metabolism; IMP biosynthesis via de novo pathway; 5-amino-1-(5-phospho-D-ribosyl)imidazole-4-carboxamide from 5-amino-1-(5-phospho-D-ribosyl)imidazole-4-carboxylate: step 1/2. The polypeptide is Phosphoribosylaminoimidazole-succinocarboxamide synthase (Rickettsia massiliae (strain Mtu5)).